A 163-amino-acid polypeptide reads, in one-letter code: Ribonuclease P protein subunit p25-like protein (163 aa).

Disordered regions lie at residues 1 to 22 and 129 to 163; these read MEHY…PQLP and NECG…DTRS. Low complexity predominate over residues 143–152; the sequence is GSMPSSSCGP. Residues 153–163 show a composition bias toward basic residues; that stretch reads RSRRRARDTRS.

It belongs to the histone-like Alba family.

The protein resides in the nucleus. Functionally, may be a component of ribonuclease P or MRP. The polypeptide is Ribonuclease P protein subunit p25-like protein (RPP25L) (Homo sapiens (Human)).